We begin with the raw amino-acid sequence, 112 residues long: MGVEKQVIRPGNGPKPAPGQTVTVHCTGFGKDGDLSQKFWSTKDEGQKPFSFQIGKGAVIKGWDEGVIGMQIGEVARLRCSSDYAYGAGGFPAWGIQPNSVLDFEIEVLSVQ.

Residues 1 to 26 (MGVEKQVIRPGNGPKPAPGQTVTVHC) are disordered. The region spanning 19-112 (GQTVTVHCTG…DFEIEVLSVQ (94 aa)) is the PPIase FKBP-type domain. C26 and C80 are disulfide-bonded.

The protein belongs to the FKBP-type PPIase family. As to quaternary structure, interacts with FIP37 and with the immunosuppressive drug FK506. Its interaction with FIP37 is inhibited by FK506. Interacts with TOR in a rapamycin-dependent manner.

It localises to the cytoplasm. It catalyses the reaction [protein]-peptidylproline (omega=180) = [protein]-peptidylproline (omega=0). Functionally, PPIases accelerate the folding of proteins. It catalyzes the cis-trans isomerization of proline imidic peptide bonds in oligopeptides. Mediates rapamycin inactivation of TOR protein kinase activity. The sequence is that of Peptidyl-prolyl cis-trans isomerase FKBP12 (FKBP12) from Arabidopsis thaliana (Mouse-ear cress).